Consider the following 257-residue polypeptide: Hydroxyacylglutathione hydrolase (257 aa).

Zn(2+) contacts are provided by histidine 54, histidine 56, aspartate 58, histidine 59, histidine 113, aspartate 137, and histidine 175.

The protein belongs to the metallo-beta-lactamase superfamily. Glyoxalase II family. As to quaternary structure, monomer. It depends on Zn(2+) as a cofactor.

The catalysed reaction is an S-(2-hydroxyacyl)glutathione + H2O = a 2-hydroxy carboxylate + glutathione + H(+). It functions in the pathway secondary metabolite metabolism; methylglyoxal degradation; (R)-lactate from methylglyoxal: step 2/2. Functionally, thiolesterase that catalyzes the hydrolysis of S-D-lactoyl-glutathione to form glutathione and D-lactic acid. This chain is Hydroxyacylglutathione hydrolase, found in Nostoc punctiforme (strain ATCC 29133 / PCC 73102).